A 245-amino-acid polypeptide reads, in one-letter code: Acetylglutamate kinase (245 aa).

Substrate contacts are provided by residues 41–42, Arg63, and Asn156; that span reads GG.

This sequence belongs to the acetylglutamate kinase family. ArgB subfamily.

It is found in the cytoplasm. The enzyme catalyses N-acetyl-L-glutamate + ATP = N-acetyl-L-glutamyl 5-phosphate + ADP. Its pathway is amino-acid biosynthesis; L-arginine biosynthesis; N(2)-acetyl-L-ornithine from L-glutamate: step 2/4. Its function is as follows. Catalyzes the ATP-dependent phosphorylation of N-acetyl-L-glutamate. The sequence is that of Acetylglutamate kinase from Streptococcus sanguinis (strain SK36).